We begin with the raw amino-acid sequence, 388 residues long: MSSVEVVAQQQQLLAAEHPRRMGKGAAADPRRAALGELTNLNAVAATNGKVGPSKKPSKASCVQKPKPPQLVAPMIQTGAAASAPVSAKPCVKEEQLCQAFSEVLLAVQDVDEQDADQPQLCSQYVKDIYKYLHVLEEQQPVRANYMQGYEVTERMRALLVDWLVQVHSRFQLLQETLYLTVAILDPFLQVHPVSRRKLQLVGVTAMLVACKYEKMYAPEVGDFSYITDNAFTKSQIVEMEQVILRSLSFQLGRPLPLHFLRRASKVAGADVEKHTLAKYLMELTLLDYHMVHYRPSEVAAAALCLSQLLLDGLPWSLTQQQYSTYEEQHLKPIMQHIAKNVVLVNEGRTKFLAVKKKYSSSKLMKISLIPQLNSSTVKALAESLLNP.

Positions 46–67 (ATNGKVGPSKKPSKASCVQKPK) are disordered.

This sequence belongs to the cyclin family. Cyclin AB subfamily. In terms of assembly, interacts with the CDK1 protein kinase to form a serine/threonine kinase holoenzyme complex also known as maturation promoting factor (MPF). The cyclin subunit imparts substrate specificity to the complex.

Functionally, essential for the control of the cell cycle at the G2/M (mitosis) transition. This is G2/mitotic-specific cyclin-B2 (ccnb2) from Oryzias curvinotus (Hynann ricefish).